The following is a 178-amino-acid chain: MLEGVIRESITKANAKALKKDGYLIANVYGKGIENVNCAFKLNPFIKYLKEKKHLIFPVKLGDKTFEVVVQEYQKNPVTNELIHVDLLAVTKGVKSKFKVPVKHQGTPVGLKNKGILMLSKKRISVECAPEHLPDHYLVDVAPLDVNESVLVRDLEKHENVKILDHDSIAVIGVIKAK.

It belongs to the bacterial ribosomal protein bL25 family. CTC subfamily. As to quaternary structure, part of the 50S ribosomal subunit; part of the 5S rRNA/L5/L18/L25 subcomplex. Contacts the 5S rRNA. Binds to the 5S rRNA independently of L5 and L18.

Its function is as follows. This is one of the proteins that binds to the 5S RNA in the ribosome where it forms part of the central protuberance. This chain is Large ribosomal subunit protein bL25, found in Helicobacter pylori (strain P12).